An 810-amino-acid polypeptide reads, in one-letter code: E3 ubiquitin-protein ligase RNF10 (810 aa).

The segment covering 1–31 (MPQSSPSAAATASDMDKNSGSSSSSASSGSS) has biased composition (low complexity). The interval 1 to 119 (MPQSSPSAAA…SFNGGRRDEV (119 aa)) is disordered. S5 carries the phosphoserine modification. Positions 76–92 (NFINQSRRSNSQKSKTF) are enriched in polar residues. An interaction with MEOX2 region spans residues 101 to 185 (GGSSKLFSSS…FNKELFLQAN (85 aa)). Residues 104-113 (SKLFSSSFNG) are compositionally biased toward low complexity. Phosphoserine occurs at positions 110 and 128. The segment at 225–267 (CPICLYPPTAAKITRCGHIFCWACILHYLSLSEKTWSKCPICY) adopts an RING-type zinc-finger fold. Disordered stretches follow at residues 598–623 (KRKRQRQKKAREERRRERRIEMEENK), 652–674 (DSALGSTSTEGRGALSLSPLSRS), 722–759 (ADVWPKTAPKKDENTLGPPAPVDSDGESDNSDRVPVPS), and 775–810 (LDTPVTSDPLSEEKGGKKRKKQKQKLLFSTSVVHTK). A compositionally biased stretch (basic and acidic residues) spans 607 to 623 (AREERRRERRIEMEENK). Residues 652–661 (DSALGSTSTE) are compositionally biased toward polar residues. A compositionally biased stretch (low complexity) spans 662–674 (GRGALSLSPLSRS). Positions 722-735 (ADVWPKTAPKKDEN) are enriched in basic and acidic residues. Residues 801 to 810 (LFSTSVVHTK) show a composition bias toward polar residues.

Belongs to the RNF10 family. In terms of assembly, interacts with MEOX2.

It localises to the cytoplasm. Its subcellular location is the nucleus. The catalysed reaction is S-ubiquitinyl-[E2 ubiquitin-conjugating enzyme]-L-cysteine + [acceptor protein]-L-lysine = [E2 ubiquitin-conjugating enzyme]-L-cysteine + N(6)-ubiquitinyl-[acceptor protein]-L-lysine.. The protein operates within protein modification; protein ubiquitination. In terms of biological role, E3 ubiquitin-protein ligase that catalyzes monoubiquitination of 40S ribosomal proteins RPS2/us5 and RPS3/us3 in response to ribosome stalling. Part of a ribosome quality control that takes place when ribosomes have stalled during translation initiation (iRQC): RNF10 acts by mediating monoubiquitination of RPS2/us5 and RPS3/us3, promoting their degradation by the proteasome. Also promotes ubiquitination of 40S ribosomal proteins in response to ribosome stalling during translation elongation. The action of RNF10 in iRQC is counteracted by USP10. May also act as a transcriptional factor involved in the regulation of MAG (Myelin-associated glycoprotein) expression. Acts as a regulator of Schwann cell differentiation and myelination. The chain is E3 ubiquitin-protein ligase RNF10 (RNF10) from Bos taurus (Bovine).